Here is a 377-residue protein sequence, read N- to C-terminus: Glutamate 5-kinase (377 aa).

ATP is bound at residue K17. Positions 56, 143, and 155 each coordinate substrate. Position 217-223 (S217–K223) interacts with ATP. Residues A282–C360 form the PUA domain.

Belongs to the glutamate 5-kinase family.

It localises to the cytoplasm. The catalysed reaction is L-glutamate + ATP = L-glutamyl 5-phosphate + ADP. It participates in amino-acid biosynthesis; L-proline biosynthesis; L-glutamate 5-semialdehyde from L-glutamate: step 1/2. In terms of biological role, catalyzes the transfer of a phosphate group to glutamate to form L-glutamate 5-phosphate. This chain is Glutamate 5-kinase, found in Maridesulfovibrio salexigens (strain ATCC 14822 / DSM 2638 / NCIMB 8403 / VKM B-1763) (Desulfovibrio salexigens).